Consider the following 643-residue polypeptide: Threonine--tRNA ligase (643 aa).

The TGS domain occupies 1–61; the sequence is MPTIKFIDGT…TNDSIVKFVY (61 aa). Positions 244-535 are catalytic; sequence DHRKISKILD…LIEEYIGNFP (292 aa). Zn(2+)-binding residues include C335, H386, and H512.

This sequence belongs to the class-II aminoacyl-tRNA synthetase family. As to quaternary structure, homodimer. The cofactor is Zn(2+).

The protein localises to the cytoplasm. The enzyme catalyses tRNA(Thr) + L-threonine + ATP = L-threonyl-tRNA(Thr) + AMP + diphosphate + H(+). In terms of biological role, catalyzes the attachment of threonine to tRNA(Thr) in a two-step reaction: L-threonine is first activated by ATP to form Thr-AMP and then transferred to the acceptor end of tRNA(Thr). Also edits incorrectly charged L-seryl-tRNA(Thr). This Buchnera aphidicola subsp. Baizongia pistaciae (strain Bp) protein is Threonine--tRNA ligase.